A 365-amino-acid chain; its full sequence is MSCFGCCGEDDDMHKTADYGGRHNQAKHFPPGNDARHHQASETAQKGPPVVKLQPIEVPIIPFSELKEATDDFGSNSLIGEGSYGRVYYGVLNNDLPSAIKKLDSNKQPDNEFLAQVSMVSRLKHDNFVQLLGYCVDGNSRILSYEFANNGSLHDILHGRKGVKGAQPGPVLSWYQRVKIAVGAARGLEYLHEKANPHIIHRDIKSSNVLLFEDDVAKIADFDLSNQAPDMAARLHSTRVLGTFGYHAPEYAMTGQLNAKSDVYSFGVVLLELLTGRKPVDHRLPRGQQSLVTWATPKLSEDKVKQCVDARLGGDYPPKAVAKLAAVAALCVQYEADFRPNMSIVVKALQPLLNARAVAPGEGVH.

Residues 18–48 (DYGGRHNQAKHFPPGNDARHHQASETAQKGP) are disordered. Residues 73–353 (FGSNSLIGEG…IVVKALQPLL (281 aa)) form the Protein kinase domain. Residues 79–87 (IGEGSYGRV) and K101 each bind ATP. Y145 is subject to Phosphotyrosine. Residue D203 is the Proton acceptor of the active site. Phosphoserine is present on residues S207 and S237. Phosphothreonine is present on residues T238 and T243. Y251 is subject to Phosphotyrosine.

It belongs to the protein kinase superfamily. Ser/Thr protein kinase family.

The catalysed reaction is L-seryl-[protein] + ATP = O-phospho-L-seryl-[protein] + ADP + H(+). It catalyses the reaction L-threonyl-[protein] + ATP = O-phospho-L-threonyl-[protein] + ADP + H(+). This is Probable receptor-like protein kinase At2g47060 from Arabidopsis thaliana (Mouse-ear cress).